The chain runs to 399 residues: Methylthioribose kinase (399 aa).

ATP contacts are provided by residues Asn-40, Lys-57, and 111-113 (EDL). Residue Asp-229 coordinates substrate. Residue 246–248 (DAE) participates in ATP binding. A substrate-binding site is contributed by Arg-344.

Belongs to the methylthioribose kinase family. In terms of assembly, homodimer.

It carries out the reaction 5-(methylsulfanyl)-D-ribose + ATP = 5-(methylsulfanyl)-alpha-D-ribose 1-phosphate + ADP + H(+). Its pathway is amino-acid biosynthesis; L-methionine biosynthesis via salvage pathway; S-methyl-5-thio-alpha-D-ribose 1-phosphate from S-methyl-5'-thioadenosine (hydrolase route): step 2/2. Functionally, catalyzes the phosphorylation of methylthioribose into methylthioribose-1-phosphate. The sequence is that of Methylthioribose kinase from Klebsiella pneumoniae subsp. pneumoniae (strain ATCC 700721 / MGH 78578).